The following is a 320-amino-acid chain: Alpha/beta hydrolase domain-containing protein 17C (320 aa).

The disordered stretch occupies residues 50 to 75; sequence RAPAPAATPAPAPAAQPAPAEEGAGP. Positions 55 to 65 are enriched in pro residues; that stretch reads AATPAPAPAAQ. Residues Ser202, Asp267, and His296 each act as charge relay system in the active site.

This sequence belongs to the AB hydrolase superfamily. ABHD17 family. Post-translationally, palmitoylated on cysteine residues located in a cysteine cluster at the N-terminus which promotes membrane localization. Palmitoylation is required for post-synaptic localization and for depalmitoylating activity towards DLG4/PSD95.

Its subcellular location is the recycling endosome membrane. The protein resides in the cell projection. The protein localises to the dendritic spine. It is found in the postsynaptic density membrane. It catalyses the reaction S-hexadecanoyl-L-cysteinyl-[protein] + H2O = L-cysteinyl-[protein] + hexadecanoate + H(+). Hydrolyzes fatty acids from S-acylated cysteine residues in proteins. Has depalmitoylating activity towards DLG4/PSD95. This is Alpha/beta hydrolase domain-containing protein 17C from Mus musculus (Mouse).